Consider the following 588-residue polypeptide: MFVLPPPPPRYTIPVAYAAGASNGMAVPVVETNNVITKPEGGCPLQVGEGTYHLQDDLHLATPPPHPSEAPIINPNPLATVPTPPTSGVKLSLVNIGPRNKNPVFAMKESVLAPPFGDGNPALAAPAVKDGLKRRKPKNNIIKSSSSFVSRVITHEASTKRLNDRNPEGLFAFANINRAFQWLDLGSKQKEEPLAKILFTKAHMLSHDINELTKSASHIDVVMGSSAGDIIWYEPISQKYARINKNGVVCNSPVTHIKWVPGSENLFMAAHANGQLVVYDKEKEDALFTPEEPVKSSGQQPLQVLKSVNSRNQKTNPVALWKLANQKITQFAFSPDQRHLAVVLEDGSLRVMDYLEEEVLDIFRSYYGGLICVCWSPDGKYIVTGGQDDLVTIWSFPERKIVARCQGHNSWVSTVAFDPWRCDERTYRFGSVGDDCRLLLWDFSVGMLHRPRAHQASTRQRTSMITSNSQHASRHRADSAGNRARSDSQRTADGYDEYDQAVRHPVEPRARTALLPPIMSKEIGSDPICWLGFQEDSIMTSSLEGHIRTWDRPREGINDTYNAHASSSAISAGAGSGSAVANSARGSL.

4 WD repeats span residues 249-289, 323-364, 365-404, and 407-451; these read VCNS…ALFT, LANQ…DIFR, SYYG…IVAR, and GHNS…LHRP. A disordered region spans residues 452-499; sequence RAHQASTRQRTSMITSNSQHASRHRADSAGNRARSDSQRTADGYDEYD. The segment covering 455-471 has biased composition (polar residues); that stretch reads QASTRQRTSMITSNSQH. Residues 523 to 560 form a WD 5 repeat; that stretch reads IGSDPICWLGFQEDSIMTSSLEGHIRTWDRPREGINDT. The segment at 569-588 is disordered; sequence AISAGAGSGSAVANSARGSL.

It belongs to the WD repeat creC family. Interacts with creB.

Functionally, component of the regulatory network controlling carbon source utilization through ubiquitination and deubiquitination involving creA, creB, creC, creD and acrB. Required to prevent the proteolysis of the CreB deubiquitinating enzyme in the absence of carbon catabolite repression. CreB deubiquitinating enzyme stabilized in a complex with the CreC leads to the expression of genes such as those in the proline and quinate pathways. This Aspergillus terreus (strain NIH 2624 / FGSC A1156) protein is Probable catabolite repression protein creC (creC).